Reading from the N-terminus, the 428-residue chain is Kynureninase (428 aa).

Residues Thr104, Thr105, 132–135 (FPSD), Asp213, His216, and Tyr238 each bind pyridoxal 5'-phosphate. Lys239 is modified (N6-(pyridoxal phosphate)lysine). Pyridoxal 5'-phosphate contacts are provided by Trp267 and Thr295.

Belongs to the kynureninase family. Homodimer. Pyridoxal 5'-phosphate is required as a cofactor.

It carries out the reaction L-kynurenine + H2O = anthranilate + L-alanine + H(+). The enzyme catalyses 3-hydroxy-L-kynurenine + H2O = 3-hydroxyanthranilate + L-alanine + H(+). The protein operates within amino-acid degradation; L-kynurenine degradation; L-alanine and anthranilate from L-kynurenine: step 1/1. It participates in cofactor biosynthesis; NAD(+) biosynthesis; quinolinate from L-kynurenine: step 2/3. Functionally, catalyzes the cleavage of L-kynurenine (L-Kyn) and L-3-hydroxykynurenine (L-3OHKyn) into anthranilic acid (AA) and 3-hydroxyanthranilic acid (3-OHAA), respectively. The protein is Kynureninase of Bacillus cereus (strain ATCC 14579 / DSM 31 / CCUG 7414 / JCM 2152 / NBRC 15305 / NCIMB 9373 / NCTC 2599 / NRRL B-3711).